Consider the following 592-residue polypeptide: Protein kinase C zeta type (592 aa).

The PB1 domain maps to 15-98 (RVRLKAHYGG…EVLIIHVFPS (84 aa)). The interaction with SQSTM1 stretch occupies residues 79-145 (AFRLACQGRD…KRFNRRAYCG (67 aa)). A Phorbol-ester/DAG-type zinc finger spans residues 130 to 180 (GHLFQAKRFNRRAYCGQCSERIWGLARQGYRCINCKLLVHKRCHVLVPLTC). The Protein kinase domain maps to 252–518 (FDLIRVIGRG…FSDIKSHAFF (267 aa)). ATP is bound by residues 258 to 266 (IGRGSYAKV) and lysine 281. Aspartate 376 acts as the Proton acceptor in catalysis. A Phosphothreonine; by PDPK1 and PI3K modification is found at threonine 410. The 72-residue stretch at 519–590 (RSIDWDLLEK…INPLLLSAEE (72 aa)) folds into the AGC-kinase C-terminal domain. The residue at position 560 (threonine 560) is a Phosphothreonine. Position 591 is a phosphoserine (serine 591).

The protein belongs to the protein kinase superfamily. AGC Ser/Thr protein kinase family. PKC subfamily. In terms of assembly, interacts with PARD6A, PARD6B and PARD6G. Part of a complex with PARD3, PARD6A or PARD6B or PARD6G and CDC42 or RAC1. Interacts with ADAP1/CENTA1. Forms a ternary complex with SQSTM1 and KCNAB2. Forms another ternary complex with SQSTM1 and GABRR3. Forms a complex with SQSTM1 and MAP2K5. Interacts (via the protein kinase domain) with WWC1. Forms a tripartite complex with WWC1 and DDR1, but predominantly in the absence of collagen. Component of the Par polarity complex, composed of at least phosphorylated PRKCZ, PARD3 and TIAM1. Interacts with PDPK1 (via N-terminal region). Interacts with WDFY2 (via WD repeats 1-3). Interacts with VAMP2. Forms a complex with WDFY2 and VAMP2. Interacts with APPL1. Interacts with WWC1, WWC2 and WWC3. In terms of processing, CDH5 is required for its phosphorylation at Thr-410. Phosphorylated by protein kinase PDPK1; phosphorylation is inhibited by the apoptotic C-terminal cleavage product of PKN2. Phosphorylation at Thr-410 by PI3K activates the kinase. Isoform 1: In brain, expressed in hippocampus, neocortex and cerebellum (at protein level). Also expressed in lung, liver, kidney, testis and to a lesser extent in pancreas, intestine and skin (at protein level). Isoform 2: Specifically expressed in brain where it localizes to the hippocampus, neocortex and cerebellum (at protein level).

It is found in the cytoplasm. The protein localises to the endosome. The protein resides in the cell junction. Its subcellular location is the membrane. The enzyme catalyses L-seryl-[protein] + ATP = O-phospho-L-seryl-[protein] + ADP + H(+). The catalysed reaction is L-threonyl-[protein] + ATP = O-phospho-L-threonyl-[protein] + ADP + H(+). Its activity is regulated as follows. Atypical PKCs (PRKCI and PRKCZ) exhibit an elevated basal enzymatic activity (that may be due to the interaction with SMG1 or SQSTM1) and are not regulated by diacylglycerol, phosphatidylserine, phorbol esters or calcium ions. Two specific sites, Thr-410 (activation loop of the kinase domain) and Thr-560 (turn motif), need to be phosphorylated for its full activation. Phosphatidylinositol 3,4,5-trisphosphate might be a physiological activator. Isoform 2: Constitutively active. Its function is as follows. Calcium- and diacylglycerol-independent serine/threonine-protein kinase that functions in phosphatidylinositol 3-kinase (PI3K) pathway and mitogen-activated protein (MAP) kinase cascade, and is involved in NF-kappa-B activation, mitogenic signaling, cell proliferation, cell polarity, inflammatory response and maintenance of long-term potentiation (LTP). Upon lipopolysaccharide (LPS) treatment in macrophages, or following mitogenic stimuli, functions downstream of PI3K to activate MAP2K1/MEK1-MAPK1/ERK2 signaling cascade independently of RAF1 activation. Required for insulin-dependent activation of AKT3, but may function as an adapter rather than a direct activator. Upon insulin treatment may act as a downstream effector of PI3K and contribute to the activation of translocation of the glucose transporter SLC2A4/GLUT4 and subsequent glucose transport in adipocytes. In EGF-induced cells, binds and activates MAP2K5/MEK5-MAPK7/ERK5 independently of its kinase activity and can activate JUN promoter through MEF2C. Through binding with SQSTM1/p62, functions in interleukin-1 signaling and activation of NF-kappa-B with the specific adapters RIPK1 and TRAF6. Participates in TNF-dependent transactivation of NF-kappa-B by phosphorylating and activating IKBKB kinase, which in turn leads to the degradation of NF-kappa-B inhibitors. In migrating astrocytes, forms a cytoplasmic complex with PARD6A and is recruited by CDC42 to function in the establishment of cell polarity along with the microtubule motor and dynein. In association with FEZ1, stimulates neuronal differentiation in PC12 cells. In the inflammatory response, is required for the T-helper 2 (Th2) differentiation process, including interleukin production, efficient activation of JAK1 and the subsequent phosphorylation and nuclear translocation of STAT6. May be involved in development of allergic airway inflammation (asthma), a process dependent on Th2 immune response. In the NF-kappa-B-mediated inflammatory response, can relieve SETD6-dependent repression of NF-kappa-B target genes by phosphorylating the RELA subunit at 'Ser-311'. Phosphorylates VAMP2 in vitro. Phosphorylates and activates LRRK1, which phosphorylates RAB proteins involved in intracellular trafficking. In terms of biological role, involved in late synaptic long term potentiation phase in CA1 hippocampal cells and long term memory maintenance. This is Protein kinase C zeta type (Prkcz) from Rattus norvegicus (Rat).